The primary structure comprises 453 residues: Bifunctional protein GlmU (453 aa).

Residues 1 to 226 (MSFSAVILAA…PIEVEGVNNR (226 aa)) are pyrophosphorylase. Residues 8–11 (LAAG), K22, Q73, 78–79 (GT), 100–102 (YGD), G137, E151, N166, and N224 each bind UDP-N-acetyl-alpha-D-glucosamine. Position 102 (D102) interacts with Mg(2+). Position 224 (N224) interacts with Mg(2+). The interval 227-247 (IQLARLERAYQAMQAERLLEQ) is linker. The N-acetyltransferase stretch occupies residues 248–453 (GVMLRDPSRF…KGWKRPVKQK (206 aa)). UDP-N-acetyl-alpha-D-glucosamine contacts are provided by R330 and K348. The active-site Proton acceptor is H360. Positions 363 and 374 each coordinate UDP-N-acetyl-alpha-D-glucosamine. Acetyl-CoA-binding positions include A377, 383–384 (NY), S402, A420, and R437.

The protein in the N-terminal section; belongs to the N-acetylglucosamine-1-phosphate uridyltransferase family. This sequence in the C-terminal section; belongs to the transferase hexapeptide repeat family. In terms of assembly, homotrimer. Mg(2+) serves as cofactor.

Its subcellular location is the cytoplasm. The catalysed reaction is alpha-D-glucosamine 1-phosphate + acetyl-CoA = N-acetyl-alpha-D-glucosamine 1-phosphate + CoA + H(+). The enzyme catalyses N-acetyl-alpha-D-glucosamine 1-phosphate + UTP + H(+) = UDP-N-acetyl-alpha-D-glucosamine + diphosphate. It participates in nucleotide-sugar biosynthesis; UDP-N-acetyl-alpha-D-glucosamine biosynthesis; N-acetyl-alpha-D-glucosamine 1-phosphate from alpha-D-glucosamine 6-phosphate (route II): step 2/2. The protein operates within nucleotide-sugar biosynthesis; UDP-N-acetyl-alpha-D-glucosamine biosynthesis; UDP-N-acetyl-alpha-D-glucosamine from N-acetyl-alpha-D-glucosamine 1-phosphate: step 1/1. Its pathway is bacterial outer membrane biogenesis; LPS lipid A biosynthesis. Catalyzes the last two sequential reactions in the de novo biosynthetic pathway for UDP-N-acetylglucosamine (UDP-GlcNAc). The C-terminal domain catalyzes the transfer of acetyl group from acetyl coenzyme A to glucosamine-1-phosphate (GlcN-1-P) to produce N-acetylglucosamine-1-phosphate (GlcNAc-1-P), which is converted into UDP-GlcNAc by the transfer of uridine 5-monophosphate (from uridine 5-triphosphate), a reaction catalyzed by the N-terminal domain. The sequence is that of Bifunctional protein GlmU from Photobacterium profundum (strain SS9).